The sequence spans 152 residues: Kininogen-1c (152 aa).

Residues Met1 to Ala23 form the signal peptide. Residues Val28–Lys44 show a composition bias toward basic and acidic residues. The tract at residues Val28–Val152 is disordered.

This sequence belongs to the bradykinin-related peptide family. Expressed by the skin glands.

It is found in the secreted. In terms of biological role, potent vasodilator. Binds B1 (BDKRB1) and B2 (BDKRB2) bradykinin receptors. The chain is Kininogen-1c from Bombina maxima (Giant fire-bellied toad).